Here is an 882-residue protein sequence, read N- to C-terminus: MKGNEIRSRFLEYFKGNGHTVAESSSLVPKDDPTLLFTNAGMVQFKRVFMGDDKRGYVRAVTSQKCVRAGGKHNDLENVGYTARHHTFFEMLGNFSFGDYFKEEAIRLAWNFLTVELGLPAEKMWVSVFEDDDEAFALWEKVEDLPKGRIVRLGEKDNFWAMGDTGPCGPCSEIHIDQGVGSSPCDNPNCAVGCDCDRFLELWNLVFMQFNRAEDGSLTALPRPSIDTGMGLERVAAVLQGKFNNYDSDLFAPIIAVLEDISGVKYGAAADTDTAIRVIADHARATSFLVADGVLPSNEGRGYVLRRIMRRAVRYGKKLGLEKPFMDRVTKAVCAEMQNAYPQLVATAALLEKVVNNEEERFRETLEHGLVQLDEKISQLLTSGGDAVIDGPFIFKLYDTFGFPFDIVRDIALERGVGFDEAGFATAMAEQRAKSRASRKGEGVKLHDEGVKALADAGKKAEFLGYEGLEADSVVEGLLSEQGSGVEKLVAGEKGRVFVAATPFYAEAGGQMGDRGSVRWQGGQASVYATQAEGTGLILHDLLVEEGELSLGLEVTLQVDDEERKATASNHSATHLLQAALISVLGDHVKQSGSLVGPERLRFDFTNFSQLTAAEIAQVETLVNEQIRNNAVIATDVLSKQEAIAGGATALFGEKYDDDVRVVSMGDYSRELCGGTHVGATGEIGLFVILSESGIAAGVRRIEALTGRAALAYVQGRLSTGNELADLLSCKSGDLVPKVESLLTAVKEGEKRVAQLAGQLASSGLDDLLNNALTVAGIKVVVAEVPLENAKALRELGDKVRDNLESGIAVIGGAVGGKVALLAIVTKDLVDRIQAGRIVSEVSGIVGGKGGGRPDMAQAGGTMPDKLSEAIASVPAIIEAML.

Residues His-571, His-575, Cys-673, and His-677 each coordinate Zn(2+).

Belongs to the class-II aminoacyl-tRNA synthetase family. Requires Zn(2+) as cofactor.

The protein localises to the cytoplasm. The enzyme catalyses tRNA(Ala) + L-alanine + ATP = L-alanyl-tRNA(Ala) + AMP + diphosphate. In terms of biological role, catalyzes the attachment of alanine to tRNA(Ala) in a two-step reaction: alanine is first activated by ATP to form Ala-AMP and then transferred to the acceptor end of tRNA(Ala). Also edits incorrectly charged Ser-tRNA(Ala) and Gly-tRNA(Ala) via its editing domain. This is Alanine--tRNA ligase from Desulfotalea psychrophila (strain LSv54 / DSM 12343).